A 338-amino-acid chain; its full sequence is Ketol-acid reductoisomerase (NADP(+)) (338 aa).

Residues 1–181 (MQIFYDKDCD…GGGRTGIIET (181 aa)) form the KARI N-terminal Rossmann domain. NADP(+)-binding positions include 24–27 (YGSQ), arginine 47, serine 50, serine 52, and 82–85 (DEFQ). Residue histidine 107 is part of the active site. Glycine 133 provides a ligand contact to NADP(+). The region spanning 182–327 (SFREETETDL…AKLRAMMPWI (146 aa)) is the KARI C-terminal knotted domain. Mg(2+) is bound by residues aspartate 190, glutamate 194, glutamate 226, and glutamate 230. Serine 251 contacts substrate.

Belongs to the ketol-acid reductoisomerase family. Mg(2+) serves as cofactor.

It carries out the reaction (2R)-2,3-dihydroxy-3-methylbutanoate + NADP(+) = (2S)-2-acetolactate + NADPH + H(+). It catalyses the reaction (2R,3R)-2,3-dihydroxy-3-methylpentanoate + NADP(+) = (S)-2-ethyl-2-hydroxy-3-oxobutanoate + NADPH + H(+). Its pathway is amino-acid biosynthesis; L-isoleucine biosynthesis; L-isoleucine from 2-oxobutanoate: step 2/4. It participates in amino-acid biosynthesis; L-valine biosynthesis; L-valine from pyruvate: step 2/4. In terms of biological role, involved in the biosynthesis of branched-chain amino acids (BCAA). Catalyzes an alkyl-migration followed by a ketol-acid reduction of (S)-2-acetolactate (S2AL) to yield (R)-2,3-dihydroxy-isovalerate. In the isomerase reaction, S2AL is rearranged via a Mg-dependent methyl migration to produce 3-hydroxy-3-methyl-2-ketobutyrate (HMKB). In the reductase reaction, this 2-ketoacid undergoes a metal-dependent reduction by NADPH to yield (R)-2,3-dihydroxy-isovalerate. In Acinetobacter baumannii (strain AB0057), this protein is Ketol-acid reductoisomerase (NADP(+)).